The primary structure comprises 63 residues: MKASELRSKDAAELGQELESLLKAQFGLRMQKATQQLANTSQLRNVRRDIARVRTLLTEKAGK.

This sequence belongs to the universal ribosomal protein uL29 family.

In Bordetella petrii (strain ATCC BAA-461 / DSM 12804 / CCUG 43448), this protein is Large ribosomal subunit protein uL29.